The following is a 155-amino-acid chain: Protein SprT-like (155 aa).

The SprT-like domain maps to 7-145 (QRHMEEVSLQ…GSCGGKLIQT (139 aa)). Position 67 (His67) interacts with Zn(2+). The active site involves Glu68. Position 71 (His71) interacts with Zn(2+).

The protein belongs to the SprT family. Zn(2+) is required as a cofactor.

The protein resides in the cytoplasm. The chain is Protein SprT-like from Listeria monocytogenes serovar 1/2a (strain ATCC BAA-679 / EGD-e).